The sequence spans 425 residues: UPF0761 membrane protein XCV0968 (425 aa).

Transmembrane regions (helical) follow at residues 48–68 (VFAL…FPAF), 105–125 (FTVA…HSIE), 154–174 (GTML…LPLF), 182–202 (LAEF…IVLI), 216–236 (ALPG…GFGF), and 250–270 (ALSA…SVLL).

The protein belongs to the UPF0761 family.

It localises to the cell inner membrane. The polypeptide is UPF0761 membrane protein XCV0968 (Xanthomonas euvesicatoria pv. vesicatoria (strain 85-10) (Xanthomonas campestris pv. vesicatoria)).